We begin with the raw amino-acid sequence, 274 residues long: Diaminopimelate epimerase (274 aa).

Residues Asn-11 and Asn-62 each coordinate substrate. The Proton donor role is filled by Cys-71. Substrate contacts are provided by residues 72 to 73 (GN), Asn-157, Asn-190, and 208 to 209 (ER). The Proton acceptor role is filled by Cys-217. Position 218–219 (218–219 (GT)) interacts with substrate.

Belongs to the diaminopimelate epimerase family. As to quaternary structure, homodimer.

It localises to the cytoplasm. The enzyme catalyses (2S,6S)-2,6-diaminopimelate = meso-2,6-diaminopimelate. It participates in amino-acid biosynthesis; L-lysine biosynthesis via DAP pathway; DL-2,6-diaminopimelate from LL-2,6-diaminopimelate: step 1/1. Catalyzes the stereoinversion of LL-2,6-diaminopimelate (L,L-DAP) to meso-diaminopimelate (meso-DAP), a precursor of L-lysine and an essential component of the bacterial peptidoglycan. This chain is Diaminopimelate epimerase, found in Elusimicrobium minutum (strain Pei191).